The following is a 216-amino-acid chain: UPF0134 protein MPN_344 (216 aa).

Positions 47–62 (FTIIEDQQDRPDKPEE) are enriched in basic and acidic residues. Disordered regions lie at residues 47–104 (FTII…PKPD) and 194–216 (GKMD…LESK). Positions 68–78 (IPKPPKPPKGP) are enriched in pro residues. The span at 83–93 (EPGQPGGPDDP) shows a compositional bias: low complexity.

It belongs to the UPF0134 family.

This Mycoplasma pneumoniae (strain ATCC 29342 / M129 / Subtype 1) (Mycoplasmoides pneumoniae) protein is UPF0134 protein MPN_344.